The sequence spans 192 residues: Phosphoheptose isomerase (192 aa).

Positions 37–192 (LADSFKAGGK…IQLIEKEMVK (156 aa)) constitute an SIS domain. 52-54 (NGG) is a binding site for substrate. Zn(2+)-binding residues include histidine 61 and glutamate 65. Substrate contacts are provided by residues glutamate 65, 93–94 (ND), 119–121 (STS), serine 124, and glutamine 172. Zn(2+)-binding residues include glutamine 172 and histidine 180.

It belongs to the SIS family. GmhA subfamily. As to quaternary structure, homotetramer. The cofactor is Zn(2+).

The protein resides in the cytoplasm. The enzyme catalyses 2 D-sedoheptulose 7-phosphate = D-glycero-alpha-D-manno-heptose 7-phosphate + D-glycero-beta-D-manno-heptose 7-phosphate. It participates in carbohydrate biosynthesis; D-glycero-D-manno-heptose 7-phosphate biosynthesis; D-glycero-alpha-D-manno-heptose 7-phosphate and D-glycero-beta-D-manno-heptose 7-phosphate from sedoheptulose 7-phosphate: step 1/1. In terms of biological role, catalyzes the isomerization of sedoheptulose 7-phosphate in D-glycero-D-manno-heptose 7-phosphate. The chain is Phosphoheptose isomerase from Salmonella dublin (strain CT_02021853).